The primary structure comprises 570 residues: Urease subunit alpha (570 aa).

Positions 131–570 constitute a Urease domain; sequence GGFDSHIHFI…LPMAQRYFMY (440 aa). Ni(2+) is bound by residues His-136, His-138, and Lys-219. Lys-219 carries the N6-carboxylysine modification. Position 221 (His-221) interacts with substrate. Residues His-248 and His-274 each coordinate Ni(2+). Residue His-322 is the Proton donor of the active site. Ni(2+) is bound at residue Asp-362.

Belongs to the metallo-dependent hydrolases superfamily. Urease alpha subunit family. Heterotrimer of UreA (gamma), UreB (beta) and UreC (alpha) subunits. Three heterotrimers associate to form the active enzyme. Ni cation serves as cofactor. Post-translationally, carboxylation allows a single lysine to coordinate two nickel ions.

The protein resides in the cytoplasm. It catalyses the reaction urea + 2 H2O + H(+) = hydrogencarbonate + 2 NH4(+). It participates in nitrogen metabolism; urea degradation; CO(2) and NH(3) from urea (urease route): step 1/1. The polypeptide is Urease subunit alpha (Rhodopseudomonas palustris (strain HaA2)).